Consider the following 150-residue polypeptide: 3-dehydroquinate dehydratase (150 aa).

Residue Tyr-26 is the Proton acceptor of the active site. Positions 77, 83, and 90 each coordinate substrate. His-103 serves as the catalytic Proton donor. Substrate is bound by residues 104–105 (LS) and Arg-114.

This sequence belongs to the type-II 3-dehydroquinase family. As to quaternary structure, homododecamer.

It catalyses the reaction 3-dehydroquinate = 3-dehydroshikimate + H2O. It participates in metabolic intermediate biosynthesis; chorismate biosynthesis; chorismate from D-erythrose 4-phosphate and phosphoenolpyruvate: step 3/7. Functionally, catalyzes a trans-dehydration via an enolate intermediate. The sequence is that of 3-dehydroquinate dehydratase from Pectobacterium carotovorum subsp. carotovorum (strain PC1).